The primary structure comprises 314 residues: Phospholipid phosphatase-related protein type 5 (314 aa).

Helical transmembrane passes span 5 to 25, 61 to 81, 120 to 140, 194 to 214, 223 to 243, and 250 to 270; these read FSLTIMLYFQMVIMAGTVMLA, IPPVLLLSLVTGVPVLVIIVG, FLGIYTFGLFATDIFVNAGQV, AALSVYAALYLAMYITSTIKA, VLCLGLMCLAFLTGINRVAEY, and VIAGFLIGISIAVFLVVCVVN.

It belongs to the PA-phosphatase related phosphoesterase family.

It is found in the cell membrane. Its function is as follows. Induces filopodia formation and promotes neurite growth. This is Phospholipid phosphatase-related protein type 5 from Xenopus laevis (African clawed frog).